A 128-amino-acid polypeptide reads, in one-letter code: Large ribosomal subunit protein bL21 (128 aa).

The segment at 104 to 128 (GKKPSVGPRPKRVKAEPAPAADAAE) is disordered. The segment covering 119–128 (EPAPAADAAE) has biased composition (low complexity).

This sequence belongs to the bacterial ribosomal protein bL21 family. As to quaternary structure, part of the 50S ribosomal subunit. Contacts protein L20.

In terms of biological role, this protein binds to 23S rRNA in the presence of protein L20. The polypeptide is Large ribosomal subunit protein bL21 (Rhodopseudomonas palustris (strain BisB5)).